The following is a 1287-amino-acid chain: DNA-directed RNA polymerase 147 kDa polypeptide (1287 aa).

The protein belongs to the poxviridae DNA-directed RNA polymerase 147 kDa subunit family. In terms of assembly, the DNA-dependent RNA polymerase used for intermediate and late genes expression consists of eight subunits Rpo30/OPG66, Rpo7/OPG90, Rpo22/OPG103, Rpo147/OPG105, Rpo18/OPG119, Rpo19/OPG131, Rpo132/OPG151 and Rpo35/OPG156. The same holoenzyme, with the addition of the transcription-specificity factor OPG109, is used for early gene expression.

The protein resides in the virion. It catalyses the reaction RNA(n) + a ribonucleoside 5'-triphosphate = RNA(n+1) + diphosphate. Part of the DNA-dependent RNA polymerase which catalyzes the transcription of viral DNA into RNA using the four ribonucleoside triphosphates as substrates. Responsible for the transcription of early, intermediate and late genes. DNA-dependent RNA polymerase associates with the early transcription factor (ETF), itself composed of OPG118 and OPG133, thereby allowing the early genes transcription. Late transcription, and probably also intermediate transcription, require newly synthesized RNA polymerase. The protein is DNA-directed RNA polymerase 147 kDa polypeptide (OPG105) of Bos taurus (Bovine).